The sequence spans 124 residues: Small ribosomal subunit protein bS6 (124 aa).

It belongs to the bacterial ribosomal protein bS6 family.

Its function is as follows. Binds together with bS18 to 16S ribosomal RNA. The protein is Small ribosomal subunit protein bS6 of Haemophilus ducreyi (strain 35000HP / ATCC 700724).